Consider the following 151-residue polypeptide: Phosphoribosyl-AMP cyclohydrolase (151 aa).

A Mg(2+)-binding site is contributed by Asp-94. Cys-95 lines the Zn(2+) pocket. Positions 96 and 98 each coordinate Mg(2+). Zn(2+)-binding residues include Cys-112 and Cys-119.

Belongs to the PRA-CH family. As to quaternary structure, homodimer. Mg(2+) serves as cofactor. It depends on Zn(2+) as a cofactor.

The protein localises to the cytoplasm. It catalyses the reaction 1-(5-phospho-beta-D-ribosyl)-5'-AMP + H2O = 1-(5-phospho-beta-D-ribosyl)-5-[(5-phospho-beta-D-ribosylamino)methylideneamino]imidazole-4-carboxamide. It functions in the pathway amino-acid biosynthesis; L-histidine biosynthesis; L-histidine from 5-phospho-alpha-D-ribose 1-diphosphate: step 3/9. In terms of biological role, catalyzes the hydrolysis of the adenine ring of phosphoribosyl-AMP. The polypeptide is Phosphoribosyl-AMP cyclohydrolase (Rhodopseudomonas palustris (strain TIE-1)).